The primary structure comprises 611 residues: Probable cysteine desulfurase 1 (611 aa).

Residues 1–208 (MRATQLYAAS…HEMVDVFDIQ (208 aa)) form a cargo-loading domain region. Residue Lys-428 is modified to N6-(pyridoxal phosphate)lysine. The active-site Cysteine persulfide intermediate is Cys-566.

The protein belongs to the class-V pyridoxal-phosphate-dependent aminotransferase family. Csd subfamily. As to quaternary structure, there are 1-2 copies of this protein in each type 2A encapsulin shell. Pyridoxal 5'-phosphate is required as a cofactor.

Its subcellular location is the encapsulin nanocompartment. It carries out the reaction (sulfur carrier)-H + L-cysteine = (sulfur carrier)-SH + L-alanine. In terms of biological role, cargo protein of a type 2A encapsulin nanocompartment involved in sulfur metabolism. Cysteine desulfurases mobilize the sulfur from L-cysteine to yield L-alanine, an essential step in sulfur metabolism for biosynthesis of a variety of sulfur-containing biomolecules. This is Probable cysteine desulfurase 1 from Mycobacterium leprae (strain TN).